The primary structure comprises 154 residues: Spermatogenesis-associated protein 19, mitochondrial (154 aa).

The N-terminal 24 residues, methionine 1 to valine 24, are a transit peptide targeting the mitochondrion. Phosphoserine is present on residues serine 26 and serine 116.

In terms of tissue distribution, expressed specifically in adult testis (at protein level).

It localises to the mitochondrion outer membrane. The protein localises to the mitochondrion. Its subcellular location is the cell projection. It is found in the cilium. The protein resides in the flagellum. Its function is as follows. Essential for sperm motility and male fertility. Plays an important role in sperm motility by regulating the organization and function of the mitochondria and is also required for correct sperm midpiece assembly. This is Spermatogenesis-associated protein 19, mitochondrial (Spata19) from Mus musculus (Mouse).